An 807-amino-acid chain; its full sequence is Phenylalanine--tRNA ligase beta subunit (807 aa).

A tRNA-binding domain is found at 39–153; sequence SARSQGVVVG…EIPAVGTPVA (115 aa). Residues 407-491 form the B5 domain; the sequence is RTPVPLQLRR…RLVGFDKFGS (85 aa). Residues Asp-469, Asp-475, Glu-478, and Glu-479 each coordinate Mg(2+). In terms of domain architecture, FDX-ACB spans 713 to 806; that stretch reads PTVPASERDL…LSKQFKAELR (94 aa).

The protein belongs to the phenylalanyl-tRNA synthetase beta subunit family. Type 1 subfamily. As to quaternary structure, tetramer of two alpha and two beta subunits. Mg(2+) is required as a cofactor.

The protein resides in the cytoplasm. It catalyses the reaction tRNA(Phe) + L-phenylalanine + ATP = L-phenylalanyl-tRNA(Phe) + AMP + diphosphate + H(+). The chain is Phenylalanine--tRNA ligase beta subunit from Synechococcus sp. (strain CC9902).